A 545-amino-acid chain; its full sequence is CTP synthase (545 aa).

An amidoligase domain region spans residues 1 to 266 (MATNYIFVTG…DDFVCERFRL (266 aa)). Residue S14 coordinates CTP. S14 is a binding site for UTP. Residues 15–20 (SLGKGI) and D72 contribute to the ATP site. Mg(2+) contacts are provided by D72 and E140. Residues 147–149 (DIE), 187–192 (KTKPTQ), and K223 contribute to the CTP site. Residues 187–192 (KTKPTQ) and K223 contribute to the UTP site. 239–241 (KDV) contacts ATP. In terms of domain architecture, Glutamine amidotransferase type-1 spans 291 to 542 (TIGMVGKYTE…VKAAYENHKK (252 aa)). Position 352 (G352) interacts with L-glutamine. C379 serves as the catalytic Nucleophile; for glutamine hydrolysis. L-glutamine contacts are provided by residues 380–383 (LGMQ), E403, and R470. Active-site residues include H515 and E517.

It belongs to the CTP synthase family. Homotetramer.

It carries out the reaction UTP + L-glutamine + ATP + H2O = CTP + L-glutamate + ADP + phosphate + 2 H(+). It catalyses the reaction L-glutamine + H2O = L-glutamate + NH4(+). The catalysed reaction is UTP + NH4(+) + ATP = CTP + ADP + phosphate + 2 H(+). The protein operates within pyrimidine metabolism; CTP biosynthesis via de novo pathway; CTP from UDP: step 2/2. With respect to regulation, allosterically activated by GTP, when glutamine is the substrate; GTP has no effect on the reaction when ammonia is the substrate. The allosteric effector GTP functions by stabilizing the protein conformation that binds the tetrahedral intermediate(s) formed during glutamine hydrolysis. Inhibited by the product CTP, via allosteric rather than competitive inhibition. Its function is as follows. Catalyzes the ATP-dependent amination of UTP to CTP with either L-glutamine or ammonia as the source of nitrogen. Regulates intracellular CTP levels through interactions with the four ribonucleotide triphosphates. The sequence is that of CTP synthase from Haemophilus influenzae (strain ATCC 51907 / DSM 11121 / KW20 / Rd).